The chain runs to 211 residues: Neuroendocrine protein 7B2 (211 aa).

An N-terminal signal peptide occupies residues 1 to 26 (MVSRMVSTMLSGLLFWLASGWTPAFA). A disordered region spans residues 106-132 (DFSEDQGYPDPPNPCPVGKTDDGCLEN). Residues Cys120 and Cys129 are joined by a disulfide bond. Residues Ser140 and Ser204 each carry the phosphoserine modification. A disordered region spans residues 173–211 (GGERRKRRSVNPYLQGQRLDNVVAKKSVPHFSDEDKDPE).

This sequence belongs to the 7B2 family. In terms of assembly, interacts with PCSK2/PC2 early in the secretory pathway. Dissociation occurs at later stages. Proteolytically cleaved in the Golgi by a furin-like convertase to generate bioactive peptides. In terms of processing, sulfated on tyrosine residues.

It localises to the secreted. Acts as a molecular chaperone for PCSK2/PC2, preventing its premature activation in the regulated secretory pathway. Binds to inactive PCSK2 in the endoplasmic reticulum and facilitates its transport from there to later compartments of the secretory pathway where it is proteolytically matured and activated. Also required for cleavage of PCSK2 but does not appear to be involved in its folding. Plays a role in regulating pituitary hormone secretion. The C-terminal peptide inhibits PCSK2 in vitro. This chain is Neuroendocrine protein 7B2 (SCG5), found in Pan troglodytes (Chimpanzee).